The primary structure comprises 153 residues: T cell receptor delta constant (153 aa).

N-linked (GlcNAc...) asparagine glycosylation occurs at N14. A disulfide bridge links C20 with C71. N77 carries N-linked (GlcNAc...) asparagine glycosylation. The segment covering 85–102 (FEVKTDSTDHVKPKETEN) has biased composition (basic and acidic residues). The disordered stretch occupies residues 85-112 (FEVKTDSTDHVKPKETENTKQPSKSCHK). A helical transmembrane segment spans residues 130-152 (LGLRMLFAKTVAVNFLLTAKLFF).

In terms of assembly, gamma-delta TR is a heterodimer composed of a gamma and delta chain; disulfide-linked. The gamma-delta TR is associated with the transmembrane signaling CD3 coreceptor proteins following the stoichiometry: a single gamma-delta TR heterodimer associates with one CD3D-CD3E heterodimer, one CD3G-CD3E heterodimer and one CD247 homodimer forming a stable octameric structure. Upon activation, gamma-delta TR complex associates with FCER1G to initiate intracellular signaling.

It localises to the cell membrane. Constant region of T cell receptor (TR) delta chain that participates in the antigen recognition. Gamma-delta TRs recognize a variety of self and foreign non-peptide antigens frequently expressed at the epithelial boundaries between the host and external environment, including endogenous lipids presented by MH-like protein CD1D and phosphoantigens presented by butyrophilin-like molecule BTN3A1. Upon antigen recognition induces rapid, innate-like immune responses involved in pathogen clearance and tissue repair. Binding of gamma-delta TR complex to antigen triggers phosphorylation of immunoreceptor tyrosine-based activation motifs (ITAMs) in the CD3 chains by the LCK and FYN kinases, allowing the recruitment, phosphorylation, and activation of ZAP70 that facilitates phosphorylation of the scaffolding proteins LCP2 and LAT. This lead to the formation of a supramolecular signalosome that recruits the phospholipase PLCG1, resulting in calcium mobilization and ERK activation, ultimately leading to T cell expansion and differentiation into effector cells. Gamma-delta TRs are produced through somatic rearrangement of a limited repertoire of variable (V), diversity (D), and joining (J) genes. The potential diversity of gamma-delta TRs is conferred by the unique ability to rearrange (D) genes in tandem and to utilize all three reading frames. The combinatorial diversity is considerably increased by the sequence exonuclease trimming and random nucleotide (N) region additions which occur during the V-(D)-J rearrangements. The chain is T cell receptor delta constant from Homo sapiens (Human).